A 574-amino-acid polypeptide reads, in one-letter code: Alpha-mannosidase I MNS5 (574 aa).

At 1–9 (MSCPIHPRR) the chain is on the cytoplasmic side. Residues 10-26 (LFLCLLISLTFFVVDPS) form a helical; Signal-anchor for type II membrane protein membrane-spanning segment. Residues 27–574 (SQHIEVKKKQ…VGYCGLWNPL (548 aa)) are Lumenal-facing. Residues Asn-89, Asn-107, and Asn-121 are each glycosylated (N-linked (GlcNAc...) asparagine). Glu-134 serves as the catalytic Proton donor. Asn-201 is a glycosylation site (N-linked (GlcNAc...) asparagine). The active site involves Asp-274. N-linked (GlcNAc...) asparagine glycosylation is present at Asn-349. Glu-367 serves as the catalytic Proton donor. Glu-388 is an active-site residue. Thr-471 lines the Ca(2+) pocket. N-linked (GlcNAc...) asparagine glycosylation is present at Asn-494.

It belongs to the glycosyl hydrolase 47 family. Requires Ca(2+) as cofactor.

Its subcellular location is the endoplasmic reticulum membrane. It functions in the pathway protein modification; protein glycosylation. Can convert Man(9)GlcNAc(2) and Man(8)GlcNAc(2) into N-glycans with a terminal alpha-1,6-linked Man residue in the C-branch. Functions in the formation of unique N-glycan structures that are specifically recognized by components of the endoplasmic reticulum-associated degradation (ERAD) machinery, which leads to the degradation of misfolded glycoproteins. Most likely generates N-glycan signal on misfolded glycoproteins that is subsequently recognized by OS9. Required for ERAD of the heavily glycosylated and misfolded BRI1 variants BRI1-5 and BRI1-9. Does not seem to play role in N-glycan processing of correctly folded proteins destined for secretion. The protein is Alpha-mannosidase I MNS5 (MNS5) of Arabidopsis thaliana (Mouse-ear cress).